The sequence spans 179 residues: ATP synthase subunit delta (179 aa).

This sequence belongs to the ATPase delta chain family. In terms of assembly, F-type ATPases have 2 components, F(1) - the catalytic core - and F(0) - the membrane proton channel. F(1) has five subunits: alpha(3), beta(3), gamma(1), delta(1), epsilon(1). F(0) has three main subunits: a(1), b(2) and c(10-14). The alpha and beta chains form an alternating ring which encloses part of the gamma chain. F(1) is attached to F(0) by a central stalk formed by the gamma and epsilon chains, while a peripheral stalk is formed by the delta and b chains.

The protein resides in the cell inner membrane. In terms of biological role, f(1)F(0) ATP synthase produces ATP from ADP in the presence of a proton or sodium gradient. F-type ATPases consist of two structural domains, F(1) containing the extramembraneous catalytic core and F(0) containing the membrane proton channel, linked together by a central stalk and a peripheral stalk. During catalysis, ATP synthesis in the catalytic domain of F(1) is coupled via a rotary mechanism of the central stalk subunits to proton translocation. Functionally, this protein is part of the stalk that links CF(0) to CF(1). It either transmits conformational changes from CF(0) to CF(1) or is implicated in proton conduction. This chain is ATP synthase subunit delta, found in Chlorobium chlorochromatii (strain CaD3).